The chain runs to 204 residues: MPQHPKHMKSLGHLMALQRPTVWVDHFPVLEQLGEPPNPDKTLMVDIGGGFGQQSKALRSRCPNVEGKIIVQDMPQTLASAEPAEGVEFSEHDFFQPQPVKGAKFYYLRHVLHDWPDEQCVQILQQVIPAMAPESRILIDEVVIPVTGVPWQAAFMDLLMMESFASIERTRAEWEALMDKAGLKIIEEYYYDGKEQAILVVIPK.

Residues G48 to G49, D73, D93 to F94, and R109 each bind S-adenosyl-L-methionine. H113 serves as the catalytic Proton acceptor.

The protein belongs to the class I-like SAM-binding methyltransferase superfamily. Cation-independent O-methyltransferase family.

It catalyses the reaction 6-demethylsterigmatocystin + S-adenosyl-L-methionine = sterigmatocystin + S-adenosyl-L-homocysteine + H(+). The protein operates within mycotoxin biosynthesis; sterigmatocystin biosynthesis. Functionally, norsolorinic acid reductase; part of the gene cluster that mediates the biosynthesis of sterigmatocystin (ST), a polyketide-derived furanocoumarin which is part of the most toxic and carcinogenic compounds among the known mycotoxins. The first step in the biosynthesis of sterigmatocystin is the production of hexanoate by the fatty acid synthase (FAS) units stcJ and stcK. The polyketide backbone is assembled by the non-reducing polyketide synthase stcA by condensation of the starter hexanoyl-CoA and 7 malonyl-CoA extender units followed by cyclization and release of norsolorinic acid. Norsolorinic acid is the first stable intermediate in the biosynthesis of sterigmatocystin and is converted into averantin (AVN) by the ketoreductase stcE which reduces the hexanoate ketone to an alcohol. Averantin is then oxidized into 5'-hydroxyaverantin (HAVN) by the cytochrome P450 monooxygenase stcF. 5'-hydroxyaverantin is further converted to 5'-oxyaverantin (OAVN) by the 5'-hydroxyaverantin dehydrogenase stcG. The next step is the conversion of OAVN into averufin (AVF) which is catalyzed by a yet to be identified enzyme. The cytochrome P450 monooxygenase stcB and the flavin-binding monooxygenase stcW are both required for the conversion of averufin to 1-hydroxyversicolorone. The esterase stcI probably catalyzes the formation of versiconal hemiacetal acetate from 1-hydroxyversicolorone. The oxydoreductase stcN then probably catalyzes the biosynthetic step from versiconal to versicolorin B (VERB). The next step is performed by the versicolorin B desaturase stcL to produce versicolorin A (VERA). The ketoreductase stcU and the cytochrome P450 monooxygenase stcS are involved in the conversion of versicolorin A to demethylsterigmatocystin. The Baeyer-Villiger oxidas stcQ and the reductase stcR might be involved in the biosynthetic step from versicolorin A to demethylsterigmatocystin. The final step in the biosynthesis of sterigmatocystin is the methylation of demethylsterigmatocystin catalyzed by the methyltransferase stcP. The polypeptide is Demethylsterigmatocystin 6-O-methyltransferase stcP (Emericella nidulans (strain FGSC A4 / ATCC 38163 / CBS 112.46 / NRRL 194 / M139) (Aspergillus nidulans)).